Here is a 906-residue protein sequence, read N- to C-terminus: Protein translocase subunit SecA (906 aa).

Residues Q87, 105–109 (GEGKT), and D512 each bind ATP. A disordered region spans residues 875 to 897 (VTFVRDEQKVGRNDPCPCGSGKK). Residues C890, C892, C901, and H902 each coordinate Zn(2+).

The protein belongs to the SecA family. Monomer and homodimer. Part of the essential Sec protein translocation apparatus which comprises SecA, SecYEG and auxiliary proteins SecDF-YajC and YidC. The cofactor is Zn(2+).

The protein resides in the cell inner membrane. It is found in the cytoplasm. The enzyme catalyses ATP + H2O + cellular proteinSide 1 = ADP + phosphate + cellular proteinSide 2.. In terms of biological role, part of the Sec protein translocase complex. Interacts with the SecYEG preprotein conducting channel. Has a central role in coupling the hydrolysis of ATP to the transfer of proteins into and across the cell membrane, serving both as a receptor for the preprotein-SecB complex and as an ATP-driven molecular motor driving the stepwise translocation of polypeptide chains across the membrane. The polypeptide is Protein translocase subunit SecA (Aeromonas hydrophila subsp. hydrophila (strain ATCC 7966 / DSM 30187 / BCRC 13018 / CCUG 14551 / JCM 1027 / KCTC 2358 / NCIMB 9240 / NCTC 8049)).